A 163-amino-acid polypeptide reads, in one-letter code: Anaerobic nitrite reductase HB1 (163 aa).

Residues 8–157 (VFTEEQEALV…LVAAIKIEMK (150 aa)) form the Globin domain. A Homodimerization motif is present at residues 41–45 (EIAPS). Ser51, Lys65, His69, Lys99, Thr103, and His104 together coordinate heme b. A Homodimerization motif is present at residues 111–123 (DEHFEVTKFALLE).

The protein belongs to the plant globin family. Homodimer. It depends on heme b as a cofactor.

Its subcellular location is the cytoplasm. The protein localises to the nucleus. The catalysed reaction is Fe(III)-heme b-[protein] + nitric oxide + H2O = Fe(II)-heme b-[protein] + nitrite + 2 H(+). Its function is as follows. Phytoglobin that reduces nitrite to nitric oxide (NO) under anoxic conditions (e.g. during flooding or in waterlogged soil). May not function as an oxygen storage or transport protein. Has an unusually high affinity for O(2) through an hexacoordinate heme iron because of a very low dissociation constant. This chain is Anaerobic nitrite reductase HB1, found in Gossypium hirsutum (Upland cotton).